We begin with the raw amino-acid sequence, 230 residues long: Oxaloacetate tautomerase FAHD1, mitochondrial (230 aa).

The transit peptide at 1-26 (MAAAAAAAAQRLLAASTKIIGVGRNY) directs the protein to the mitochondrion. 3 residues coordinate Mg(2+): Glu73, Glu75, and Asp104.

The protein belongs to the FAH family. Mg(2+) serves as cofactor. Requires Mn(2+) as cofactor.

It localises to the mitochondrion. It catalyses the reaction oxaloacetate = enol-oxaloacetate. Its function is as follows. Tautomerase that converts enol-oxaloacetate, a strong inhibitor of succinate dehydrogenase, to the physiological keto form of oxaloacetate. In Oryza sativa subsp. japonica (Rice), this protein is Oxaloacetate tautomerase FAHD1, mitochondrial.